Here is a 704-residue protein sequence, read N- to C-terminus: MMKHPQDLSVTDDQQLMKVNKVEKMEQELHDPESESHIMHADALASAYPAASQPHSPIGLALSPNGGGLGLSNSSNQSSENFALCNGNGNAGSAGGGSASSGSNNNNSMFSPNNNLSGSGSGTNSSQQQLQQQQQQQSPTVCAICGDRATGKHYGASSCDGCKGFFRRSVRKNHQYTCRFARNCVVDKDKRNQCRYCRLRKCFKAGMKKEAVQNERDRISCRRTSNDDPDPGNGLSVISLVKAENESRQSKAGAAMEPNINEDLSNKQFASINDVCESMKQQLLTLVEWAKQIPAFNELQLDDQVALLRAHAGEHLLLGLSRRSMHLKDVLLLSNNCVITRHCPDPLVSPNLDISRIGARIIDELVTVMKDVGIDDTEFACIKALVFFDPNAKGLNEPHRIKSLRHQILNNLEDYISDRQYESRGRFGEILLILPVLQSITWQMIEQIQFAKIFGVAHIDSLLQEMLLGGELADNPLPLSPPNQSNDYQSPTHTGNMEGGNQVNSSLDSLATSGGPGSHSLDLEVQHIQALIEANSADDSFRAYAASTAAAAAAAVSSSSSAPASVAPASISPPLNSPKSQHQHQQHATHQQQQESSYLDMPVKHYNGSRSGPLPTQHSPQRMHPYQRAVASPVEVSSGGGGLGLRNPADITLNEYNRSEGSSAEELLRRTPLKIRAPEMLTAPAGYGTEPCRMTLKQEPETGY.

The disordered stretch occupies residues 93–133 (SAGGGSASSGSNNNNSMFSPNNNLSGSGSGTNSSQQQLQQQ). Low complexity predominate over residues 100-133 (SSGSNNNNSMFSPNNNLSGSGSGTNSSQQQLQQQ). The nuclear receptor DNA-binding region spans 139–214 (PTVCAICGDR…AGMKKEAVQN (76 aa)). 2 NR C4-type zinc fingers span residues 142 to 162 (CAIC…CDGC) and 178 to 197 (CRFA…CRYC). One can recognise an NR LBD domain in the interval 232–470 (GNGLSVISLV…SLLQEMLLGG (239 aa)). Disordered regions lie at residues 474–520 (DNPL…GSHS), 563–624 (PASV…QRMH), and 684–704 (PAGY…ETGY). Positions 487–512 (DYQSPTHTGNMEGGNQVNSSLDSLAT) are enriched in polar residues. A compositionally biased stretch (low complexity) spans 563 to 574 (PASVAPASISPP). The span at 608–620 (GSRSGPLPTQHSP) shows a compositional bias: polar residues.

It belongs to the nuclear hormone receptor family. NR2 subfamily. Homodimer. As to expression, in third instar larvae, expressed at high levels in midgut and attached gastric caeca, fat body, Malpighian tubules and oenocytes, and at lower levels in proventriculus, salivary glands, epidermis, brain and ring gland. Not detected in imaginal disks and the median neurosecretory cells that produce insulin-like peptides (at protein level). In developing embryos, expressed in mid-gut, fat bodies and the distal region of Malpighian tubules.

It localises to the nucleus. Transcriptionally controlled transcription factor. Important for the differentiation of various specialized cell types that arise from both endoderm and mesoderm. May have a role in early gut formation. Plays an essential role in lipid catabolism, regulating lipid mobilization and beta-oxidation in response to nutrient deprivation. The protein is Transcription factor HNF-4 homolog (Hnf4) of Drosophila melanogaster (Fruit fly).